The sequence spans 27 residues: Pyruvate dehydrogenase protein X component, mitochondrial (27 aa).

The disordered stretch occupies residues Phe1–Arg27. The Peripheral subunit-binding (PSBD) domain maps to Arg2–Arg27. The residue at position 13 (Lys13) is an N6-acetyllysine. Ser15 carries the phosphoserine modification. Over residues Asp17–Arg27 the composition is skewed to polar residues.

Belongs to the 2-oxoacid dehydrogenase family. In terms of assembly, part of the inner core of the multimeric pyruvate dehydrogenase complex that is composed of about 48 DLAT and 12 PDHX molecules. This core binds multiple copies of pyruvate dehydrogenase (subunits PDH1A and PDHB, E1), dihydrolipoamide acetyltransferase (DLAT, E2) and lipoamide dehydrogenase (DLD, E3). Interacts with SIRT4. Interacts with DLD.

The protein resides in the mitochondrion matrix. Required for anchoring dihydrolipoamide dehydrogenase (E3) to the dihydrolipoamide transacetylase (E2) core of the pyruvate dehydrogenase complexes of eukaryotes. This specific binding is essential for a functional PDH complex. This chain is Pyruvate dehydrogenase protein X component, mitochondrial, found in Mesocricetus auratus (Golden hamster).